The chain runs to 557 residues: Potassium-transporting ATPase potassium-binding subunit (557 aa).

The next 12 helical transmembrane spans lie at 5–25 (GFLL…PLGS), 63–83 (LSAI…MLLG), 132–152 (GLTV…FALI), 170–190 (LLRI…LFFI), 253–273 (FVQM…FGEV), 283–303 (LLWA…WAEV), 329–349 (VLVS…AVIA), 356–376 (ALGG…FGGV), 379–399 (GLYG…LMIG), 416–436 (LTAL…ALAM), 484–504 (LLAL…MAIA), and 526–546 (LFVG…FIPA).

Belongs to the KdpA family. In terms of assembly, the system is composed of three essential subunits: KdpA, KdpB and KdpC.

It localises to the cell inner membrane. Part of the high-affinity ATP-driven potassium transport (or Kdp) system, which catalyzes the hydrolysis of ATP coupled with the electrogenic transport of potassium into the cytoplasm. This subunit binds the periplasmic potassium ions and delivers the ions to the membrane domain of KdpB through an intramembrane tunnel. This chain is Potassium-transporting ATPase potassium-binding subunit, found in Escherichia coli (strain UTI89 / UPEC).